The primary structure comprises 111 residues: DNA-binding protein AF_2068 (111 aa).

Belongs to the PDCD5 family.

The sequence is that of DNA-binding protein AF_2068 from Archaeoglobus fulgidus (strain ATCC 49558 / DSM 4304 / JCM 9628 / NBRC 100126 / VC-16).